We begin with the raw amino-acid sequence, 939 residues long: Translation initiation factor IF-2 (939 aa).

Disordered regions lie at residues 51-81 (LGTKESGQDTGQATNEAAAAHRPTTVIGGKK) and 137-353 (VTNK…EMKA). A compositionally biased stretch (basic and acidic residues) spans 181 to 210 (NEKKAGAPEIKRAEHTETVEKSKTAVDSKK). Low complexity predominate over residues 259–277 (PVNRSPRPSTPSPNRSAGG). The span at 300–312 (RRDEKPAERDSRP) shows a compositional bias: basic and acidic residues. The tr-type G domain maps to 437 to 606 (GRCPVVTVMG…QLAAEMLELK (170 aa)). Positions 446–453 (GHVDHGKT) are G1. 446–453 (GHVDHGKT) serves as a coordination point for GTP. The interval 471–475 (GITQH) is G2. The interval 492–495 (DTPG) is G3. Residues 492–496 (DTPGH) and 546–549 (NKID) each bind GTP. A G4 region spans residues 546 to 549 (NKID). Residues 582–584 (SAK) are G5.

Belongs to the TRAFAC class translation factor GTPase superfamily. Classic translation factor GTPase family. IF-2 subfamily.

Its subcellular location is the cytoplasm. One of the essential components for the initiation of protein synthesis. Protects formylmethionyl-tRNA from spontaneous hydrolysis and promotes its binding to the 30S ribosomal subunits. Also involved in the hydrolysis of GTP during the formation of the 70S ribosomal complex. This chain is Translation initiation factor IF-2, found in Desulfotalea psychrophila (strain LSv54 / DSM 12343).